Reading from the N-terminus, the 140-residue chain is Cysteine proteinase inhibitor 1 (140 aa).

An N-terminal signal peptide occupies residues 1–26 (MRKYRVAGLVAALLVLHSLATPSAQA). The Cystatin domain occupies 48–135 (GGVEPVGNEN…KELQEFKPVD (88 aa)). Residues 91 to 95 (QVVAG) carry the Secondary area of contact motif.

It belongs to the cystatin family. Phytocystatin subfamily.

The protein resides in the secreted. Functionally, there are two distinct cystatins in rice seeds (Oryzacystatin-1 and -2) with different specificities against cysteine proteinases. May be involved in the control of germination by inhibition of endogenous cysteine proteinases. May play a role in defense by inhibiting exogenous proteases such as those present in digestive tracks of insects and nematodes. This is Cysteine proteinase inhibitor 1 from Oryza sativa subsp. japonica (Rice).